Here is a 1073-residue protein sequence, read N- to C-terminus: Carbamoyl phosphate synthase large chain (1073 aa).

Residues 2–403 are carboxyphosphate synthetic domain; it reads PKRTDIKSIL…SLQKALRGLE (402 aa). ATP-binding residues include Arg129, Arg169, Gly175, Gly176, Glu208, Leu210, Glu215, Gly241, Ile242, His243, Gln285, and Glu299. The ATP-grasp 1 domain occupies 133–328; sequence DVAMKKIGLE…IAKVAAKLAV (196 aa). Mg(2+) contacts are provided by Gln285, Glu299, and Asn301. Positions 285, 299, and 301 each coordinate Mn(2+). The tract at residues 404 to 553 is oligomerization domain; the sequence is VGATGFDPKV…YSTYEEECEA (150 aa). Positions 554 to 936 are carbamoyl phosphate synthetic domain; it reads NPSTDREKIM…AFAKAQLGSN (383 aa). Residues 679–870 form the ATP-grasp 2 domain; the sequence is QHAVDRLKLK…LAKVAARVMA (192 aa). The ATP site is built by Arg715, His754, Leu756, Glu761, Gly786, Val787, His788, Ser789, Gln829, and Glu841. Positions 829, 841, and 843 each coordinate Mg(2+). Residues Gln829, Glu841, and Asn843 each coordinate Mn(2+). The 137-residue stretch at 937–1073 folds into the MGS-like domain; it reads STMKKHGRAL…SVQEMHAQIK (137 aa). The allosteric domain stretch occupies residues 937–1073; the sequence is STMKKHGRAL…SVQEMHAQIK (137 aa).

The protein belongs to the CarB family. Composed of two chains; the small (or glutamine) chain promotes the hydrolysis of glutamine to ammonia, which is used by the large (or ammonia) chain to synthesize carbamoyl phosphate. Tetramer of heterodimers (alpha,beta)4. The cofactor is Mg(2+). Mn(2+) is required as a cofactor.

The enzyme catalyses hydrogencarbonate + L-glutamine + 2 ATP + H2O = carbamoyl phosphate + L-glutamate + 2 ADP + phosphate + 2 H(+). It carries out the reaction hydrogencarbonate + NH4(+) + 2 ATP = carbamoyl phosphate + 2 ADP + phosphate + 2 H(+). It participates in amino-acid biosynthesis; L-arginine biosynthesis; carbamoyl phosphate from bicarbonate: step 1/1. Its pathway is pyrimidine metabolism; UMP biosynthesis via de novo pathway; (S)-dihydroorotate from bicarbonate: step 1/3. Its function is as follows. Large subunit of the glutamine-dependent carbamoyl phosphate synthetase (CPSase). CPSase catalyzes the formation of carbamoyl phosphate from the ammonia moiety of glutamine, carbonate, and phosphate donated by ATP, constituting the first step of 2 biosynthetic pathways, one leading to arginine and/or urea and the other to pyrimidine nucleotides. The large subunit (synthetase) binds the substrates ammonia (free or transferred from glutamine from the small subunit), hydrogencarbonate and ATP and carries out an ATP-coupled ligase reaction, activating hydrogencarbonate by forming carboxy phosphate which reacts with ammonia to form carbamoyl phosphate. The polypeptide is Carbamoyl phosphate synthase large chain (Escherichia coli O157:H7).